The chain runs to 525 residues: G-protein regulator 1 (525 aa).

One can recognise a GoLoco domain in the interval 424 to 445 (PVDMMDLIFSMSSRMDDQRTEL). Residues 488-525 (HTMNRILKRSKKSKSSLDSTNSMQGDDTRSDDVTMTSK) form a disordered region.

As to quaternary structure, interacts with gpr-1, lin-5 and GDP-bound goa-1.

It is found in the cytoplasm. The protein localises to the cell cortex. Its subcellular location is the cytoskeleton. It localises to the spindle. In the 1-cell embryo, probably together with gpr-2, controls nuclear rotation and spindle elongation during mitosis. Complex of gpr-1 and gpr-2, in association with lin-5, activates G-protein signaling to affect mitotic spindle force. Polarity determinants (par genes) may regulate lin-5/gpr-1/gpr-2/goa-1 locally to create the asymmetric forces that drive spindle movement. This chain is G-protein regulator 1 (gpr-1), found in Caenorhabditis elegans.